The following is a 259-amino-acid chain: Kynurenine formamidase (259 aa).

An HGGXW motif is present at residues 34–38 (HGGAW). The Nucleophile role is filled by serine 103. Residues aspartate 196 and histidine 228 contribute to the active site.

This sequence belongs to the kynurenine formamidase family. As to quaternary structure, homodimer.

The catalysed reaction is N-formyl-L-kynurenine + H2O = L-kynurenine + formate + H(+). The protein operates within amino-acid degradation; L-tryptophan degradation via kynurenine pathway; L-kynurenine from L-tryptophan: step 2/2. In terms of biological role, catalyzes the hydrolysis of N-formyl-L-kynurenine to L-kynurenine, the second step in the kynurenine pathway of tryptophan degradation. Kynurenine may be further oxidized to nicotinic acid, NAD(H) and NADP(H). Required for elimination of toxic metabolites. In Meyerozyma guilliermondii (strain ATCC 6260 / CBS 566 / DSM 6381 / JCM 1539 / NBRC 10279 / NRRL Y-324) (Yeast), this protein is Kynurenine formamidase.